We begin with the raw amino-acid sequence, 833 residues long: MPPPLRHRSMRIFVNDDRHVMAKHSAIYPTQEELEGVQNMVSHTERALKLVSDWLDDQEKGNAKVNALDTDGEGDKETEPSTGEQATRSLRGVMRVGLVAKGLLLKGDLDLELVLLCKEKPTITLLKKVSDNLAVQLKQLVTEEKYDVKPCIRDATIVIKNAKEPPLTLTIHLTSPLVREEVEKQAAGETLSVIDPPDVLDRQKCLTALASLRHAKWFQARANGLRSCVIVIRILRDLCARVPTWSPLRGWPLELLCEKAIGTGNRPMGAGEALRRVLECLASGILMADGSGICDPCEKELTDAISHVDRQQREDITQSAQHALRLSAFGQLHKVLGMDPLPSKMPRKPRSDTPIDYTVQIPPSTTYVPPMKRPIEEESTDEKNPNKKKKKLQKKSPDEKAEPAQAMNALMRLNQLKPGLQYKLISQTGPVHVPVFTMSVEVDGKNFEASGPSKRTAKLHVAVKVLQDMGLPTGMDQKTTELMKVDEPVSTQETLPPVIKMEPEPVPITETPTDENARQQGPILTKHGKNPVMELNEKRRGLKYELISETGGSHDKRFVMEVEIDGQKFQGTGSNKKVAKAYAALAALEKLFPEGSNSEVNKKKKMPPMHTGFGMVSGPPSDMMPNPRGRGRGRGRGRGRGFNNGGGFNQGGYGTYGYGGNNSGYNFYNNGGSNGGSVASNQGTNQSSGGAAATGGFGSYYQSDSSYTSPAPTPKPVGKKPPMHQNTKPQAPGVGQGGSYGQYNQGYGQKKNFGQTQGGGGAAAGGGGNFNYSTAYPSQVTGGQEYNYEGYSNQSNYNSQGGANQNFGGNSAPYNSGQAGYGRGDPNMNYQYR.

A DZF domain is found at R11–S379. Disordered stretches follow at residues V65–A86 and D339–P403. At T70 the chain carries Phosphothreonine. A compositionally biased stretch (basic and acidic residues) spans R373–P385. DRBM domains are found at residues E402 to L471 and H527 to P593. Disordered stretches follow at residues N597–G651, Q702–A762, and A775–R833. The span at G629–G639 shows a compositional bias: basic residues. Residues R640–G651 are compositionally biased toward gly residues. Residues A775–Q818 show a composition bias toward polar residues.

The protein localises to the nucleus. It is found in the nucleolus. The protein resides in the cytoplasm. RNA-binding protein that plays an essential role in the biogenesis of circular RNAs (circRNAs) which are produced by back-splicing circularization of pre-mRNAs. Within the nucleus, promotes circRNAs processing by stabilizing the regulatory elements residing in the flanking introns of the circularized exons. Plays thereby a role in the back-splicing of a subset of circRNAs. As a consequence, participates in a wide range of transcriptional and post-transcriptional processes. Binds to poly-U elements and AU-rich elements (AREs) in the 3'-UTR of target mRNAs. Upon viral infection, ILF3 accumulates in the cytoplasm and participates in the innate antiviral response. Mechanistically, ILF3 becomes phosphorylated and activated by the double-stranded RNA-activated protein kinase/PKR which releases ILF3 from cellular mature circRNAs. In turn, unbound ILF3 molecules are able to interact with and thus inhibit viral mRNAs. The sequence is that of Interleukin enhancer-binding factor 3 homolog (ilf3) from Danio rerio (Zebrafish).